We begin with the raw amino-acid sequence, 84 residues long: Large ribosomal subunit protein bL27 (84 aa).

Residues M1–G22 are disordered.

The protein belongs to the bacterial ribosomal protein bL27 family.

This is Large ribosomal subunit protein bL27 from Shewanella amazonensis (strain ATCC BAA-1098 / SB2B).